A 302-amino-acid chain; its full sequence is Sulfate adenylyltransferase subunit 2 (302 aa).

It belongs to the PAPS reductase family. CysD subfamily. Heterodimer composed of CysD, the smaller subunit, and CysN.

It carries out the reaction sulfate + ATP + H(+) = adenosine 5'-phosphosulfate + diphosphate. The protein operates within sulfur metabolism; hydrogen sulfide biosynthesis; sulfite from sulfate: step 1/3. Its function is as follows. With CysN forms the ATP sulfurylase (ATPS) that catalyzes the adenylation of sulfate producing adenosine 5'-phosphosulfate (APS) and diphosphate, the first enzymatic step in sulfur assimilation pathway. APS synthesis involves the formation of a high-energy phosphoric-sulfuric acid anhydride bond driven by GTP hydrolysis by CysN coupled to ATP hydrolysis by CysD. The sequence is that of Sulfate adenylyltransferase subunit 2 from Enterobacter sp. (strain 638).